A 181-amino-acid polypeptide reads, in one-letter code: Oligoribonuclease (181 aa).

In terms of domain architecture, Exonuclease spans 8-171 (LIWIDMEMTG…ADIYDSIEEL (164 aa)). Tyr129 is an active-site residue.

It belongs to the oligoribonuclease family.

Its subcellular location is the cytoplasm. Functionally, 3'-to-5' exoribonuclease specific for small oligoribonucleotides. The chain is Oligoribonuclease from Nitrosomonas europaea (strain ATCC 19718 / CIP 103999 / KCTC 2705 / NBRC 14298).